A 138-amino-acid polypeptide reads, in one-letter code: MENKRVEHFLFELVSPEKLVFSEQVISVVIPSASGALTVMAHHEPLVASIVLGSVRVLTSSGEKLFAVCRGVANITSSGCSLLVEKVVAVEHLSFDVLEQQISQVRATLEGDSDDRISHKVQDFFHQLTNADGVLTEA.

This sequence belongs to the ATPase epsilon chain family. F-type ATPases have 2 components, CF(1) - the catalytic core - and CF(0) - the membrane proton channel. CF(1) has five subunits: alpha(3), beta(3), gamma(1), delta(1), epsilon(1). CF(0) has three main subunits: a, b and c.

It localises to the cell inner membrane. Functionally, produces ATP from ADP in the presence of a proton gradient across the membrane. The sequence is that of ATP synthase epsilon chain from Bartonella quintana (strain Toulouse) (Rochalimaea quintana).